Reading from the N-terminus, the 24-residue chain is Brevinin-1R (24 aa).

A disulfide bond links Cys-18 and Cys-24.

In terms of tissue distribution, expressed by the skin glands.

The protein resides in the secreted. In terms of biological role, antimicrobial peptide. This chain is Brevinin-1R, found in Pelophylax ridibundus (Marsh frog).